The following is a 424-amino-acid chain: DUF21 domain-containing protein At4g33700 (424 aa).

Over 1–11 (MAVEYVCCSPN) the chain is Extracellular. The 184-residue stretch at 8 to 191 (CSPNFFIHIA…GKGGELTHDE (184 aa)) folds into the CNNM transmembrane domain. The helical transmembrane segment at 12-32 (FFIHIAVIVFLVLFAGLMSGL) threads the bilayer. Residues 33–70 (TLGLMSLSLVDLEVLAKSGTPEHRKYAAKILPVVKNQH) are Cytoplasmic-facing. A helical transmembrane segment spans residues 71–91 (LLLVTLLICNAAAMETLPIFL). Over 92-94 (DGL) the chain is Extracellular. The chain crosses the membrane as a helical span at residues 95-115 (VTAWGAILISVTLILLFGEII). At 116–136 (PQSICSRYGLAIGATVAPFVR) the chain is on the cytoplasmic side. The chain crosses the membrane as a helical span at residues 137–157 (VLVFICLPVAWPISKLLDFLL). Over 158-424 (GHRRAALFRR…DETDHHFEDS (267 aa)) the chain is Extracellular. A CBS 1 domain is found at 210–271 (MTPISDIFVI…TINPDEEIPV (62 aa)). Residues N273 and N319 are each glycosylated (N-linked (GlcNAc...) asparagine). CBS domains are found at residues 275 to 331 (TIRR…DVDS) and 355 to 416 (PNRA…IFDE). Disordered stretches follow at residues 321-340 (SVKEARVDVDSEGTPTPQER) and 355-374 (PNRASSFKGGSKSKKWSKDN). A Phosphoserine modification is found at S331.

It is found in the membrane. The protein is DUF21 domain-containing protein At4g33700 (CBSDUF6) of Arabidopsis thaliana (Mouse-ear cress).